The chain runs to 439 residues: Protein ABHD8 (439 aa).

Disordered stretches follow at residues 54 to 75 and 122 to 148; these read HAGP…PGVK and ELAE…RPKR. Residues 58 to 67 show a composition bias toward pro residues; the sequence is APIPTPPPPP. Residues 138–148 are compositionally biased toward basic residues; that stretch reads GRRRRPRRPKR. An AB hydrolase-1 domain is found at 169–271; that stretch reads VLFFIHGVGG…HKVIMINGGG (103 aa). Catalysis depends on charge relay system residues Ser-244, Asp-362, and His-390. Residues 415–439 are disordered; it reads EAEPKLEPKPKPQLLQPEPAPGEEK.

This sequence belongs to the AB hydrolase superfamily. Interacts with NLRP3 (via NACHT and LLR domains); this interaction is enhanced in the presence of NLRP3 inflammasome inducers, such as ATP, nigericin, silica, or alum. Interacts with ZDHHC12.

It localises to the cytoplasm. Its function is as follows. Negatively regulates NLRP3-driven inflammation. Promotes NLRP3 degradation through the chaperone-mediated autophagy (CMA) pathway, hence attenuating inflammasome activation and IL1B secretion. Acts by recruiting palmitoyltransferase ZDHHC12 to NLRP3, facilitating NLRP3 palmitoylation and subsequent degradation. The sequence is that of Protein ABHD8 from Mus musculus (Mouse).